Consider the following 334-residue polypeptide: Fructose-1,6-bisphosphatase class 1 (334 aa).

Mg(2+) is bound by residues Glu-90, Asp-113, Leu-115, and Asp-116. Residues 116-119 (DGSS), Asn-209, Tyr-242, and Lys-272 each bind substrate. Mg(2+) is bound at residue Glu-278.

The protein belongs to the FBPase class 1 family. As to quaternary structure, homotetramer. It depends on Mg(2+) as a cofactor.

It localises to the cytoplasm. It carries out the reaction beta-D-fructose 1,6-bisphosphate + H2O = beta-D-fructose 6-phosphate + phosphate. Its pathway is carbohydrate biosynthesis; gluconeogenesis. The chain is Fructose-1,6-bisphosphatase class 1 from Actinobacillus pleuropneumoniae serotype 5b (strain L20).